The sequence spans 184 residues: Acyl-homoserine-lactone synthase (184 aa).

This sequence belongs to the autoinducer synthase family.

It catalyses the reaction a fatty acyl-[ACP] + S-adenosyl-L-methionine = an N-acyl-L-homoserine lactone + S-methyl-5'-thioadenosine + holo-[ACP] + H(+). Functionally, involved in the synthesis of the acyl-homoserine lactone (AHL) signal N-(3-hydroxydodecanoyl)-L-HSL (3-hydroxy-C(12)-HSL or OH-dDHL). Required for normal biofilm development. This chain is Acyl-homoserine-lactone synthase, found in Acinetobacter baumannii.